The primary structure comprises 378 residues: Ribosomal RNA large subunit methyltransferase G (378 aa).

Belongs to the methyltransferase superfamily. RlmG family.

Its subcellular location is the cytoplasm. The enzyme catalyses guanosine(1835) in 23S rRNA + S-adenosyl-L-methionine = N(2)-methylguanosine(1835) in 23S rRNA + S-adenosyl-L-homocysteine + H(+). Its function is as follows. Specifically methylates the guanine in position 1835 (m2G1835) of 23S rRNA. This is Ribosomal RNA large subunit methyltransferase G from Salmonella newport (strain SL254).